Here is a 507-residue protein sequence, read N- to C-terminus: Cytochrome P450 monooxygenase ptmU (507 aa).

A helical membrane pass occupies residues 4-24; it reads VNAWWVGGSLLLGIWAIVVFF. Residues Asn98, Asn202, and Asn398 are each glycosylated (N-linked (GlcNAc...) asparagine). Cys444 provides a ligand contact to heme.

Belongs to the cytochrome P450 family. The cofactor is heme.

The protein localises to the membrane. It participates in secondary metabolite biosynthesis. Functionally, cytochrome P450 monooxygenase; part of the gene cluster that mediates the biosynthesis of the indole diterpenes penitrems. The geranylgeranyl diphosphate (GGPP) synthase ptmG catalyzes the first step in penitrem biosynthesis via conversion of farnesyl pyrophosphate and isopentyl pyrophosphate into geranylgeranyl pyrophosphate (GGPP). Condensation of indole-3-glycerol phosphate with GGPP by the prenyl transferase ptmC then forms 3-geranylgeranylindole (3-GGI). Epoxidation by the FAD-dependent monooxygenase ptmM leads to a epoxidized-GGI that is substrate of the terpene cyclase ptmB for cyclization to yield paspaline. Paspaline is subsequently converted to 13-desoxypaxilline by the cytochrome P450 monooxygenase ptmP, the latter being then converted to paxilline by the cytochrome P450 monooxygenase ptmQ. Paxilline is converted to beta-paxitriol via C-10 ketoreduction by the short-chain dehydrogenase ptmH which can be monoprenylated at the C-20 by the indole diterpene prenyltransferase ptmD. A two-step elimination (acetylation and elimination) process performed by the O-acetyltransferase ptmV and ptmI leads to the production of the prenylated form of penijanthine. The FAD-linked oxidoreductase ptmO then converts the prenylated form of penijanthine into PC-M5 which is in turn transformed into PC-M4 by the aromatic dimethylallyltransferase ptmE. Five sequential oxidative transformations performed by the cytochrome P450 monooxygenases ptmK, ptmU, ptmL, ptmN and ptmJ yield the various penitrem compounds. PtmK, ptmU and ptmM are involved in the formation of the key bicyclic ring of penitrem C via the formation of the intermediates secopenitrem D and penitrem D. PtmL catalyzes the epoxidation of penitrem D and C to yield penitrem B and F, respectively. PtmJ catalyzes the last benzylic hydroxylation to convert penitrem B to prenitrem E and penitrem F to penitrem A. The sequence is that of Cytochrome P450 monooxygenase ptmU from Penicillium ochrochloron.